Consider the following 314-residue polypeptide: MARRDGDSWEITESVGTTALGVASARDAETRSPNPLISDPYAGHFLAAAGDGAWNAYRFDGEPPAALVEAEPRLVERIDAMRSYVACRTKFFDDFFGDASTSGIRQAVILASGLDARAWRLDWPRDAVLFELDLPRVLAFKAETLDKQGATPRIRHVPVAVDLRDDWPAALRAGGFDVGRPAAWIAEGLLPYLPPAAQDLLFERIDTLSAPGSRIAVENFGEDFFNPETLARQRERGQAFRRVAEEMQGQDIPDVADLWYLEERTDAGEFLAGRGWRVTSETAVALLGRHGRDIPADLPDATPNSAFLFAQKAD.

Residues aspartate 133 and 162 to 163 (DL) each bind S-adenosyl-L-methionine.

It belongs to the UPF0677 family.

Exhibits S-adenosyl-L-methionine-dependent methyltransferase activity. The chain is Putative S-adenosyl-L-methionine-dependent methyltransferase MAB_3886c from Mycobacteroides abscessus (strain ATCC 19977 / DSM 44196 / CCUG 20993 / CIP 104536 / JCM 13569 / NCTC 13031 / TMC 1543 / L948) (Mycobacterium abscessus).